A 221-amino-acid polypeptide reads, in one-letter code: Endonuclease segA (221 aa).

In terms of domain architecture, GIY-YIG spans 8–91; the sequence is KYNYTYVITN…VVNDPMTYNL (84 aa). The interval 137-164 is disordered; that stretch reads KKQSEETKAKRKEALLNNPYGYNRNKPS. The segment covering 138 to 150 has biased composition (basic and acidic residues); that stretch reads KQSEETKAKRKEA.

To endonucleases of group I introns of fungi and phage. The cofactor is Mg(2+).

Probably involved in the movement of the endonuclease-encoding DNA. The protein is Endonuclease segA (segA) of Escherichia coli (Bacteriophage T4).